A 92-amino-acid polypeptide reads, in one-letter code: MKILLAIALMLSTVMWVSTQQPQAVHTYCGRHLARTLADLCWEAGVDKRSGAQFASYGSAWLMPYSEGRGKRGIVDECCLRPCSVDVLLSYC.

The signal sequence occupies residues 1–19 (MKILLAIALMLSTVMWVST). Gln20 is modified (pyrrolidone carboxylic acid). 3 disulfide bridges follow: Cys29–Cys79, Cys41–Cys92, and Cys78–Cys83. The propeptide at 50 to 70 (SGAQFASYGSAWLMPYSEGRG) is c peptide like.

The protein belongs to the insulin family. In terms of assembly, heterodimer of a B chain and an A chain linked by two disulfide bonds.

It localises to the secreted. In terms of biological role, brain peptide responsible for activation of prothoracic glands to produce ecdysone in insects. The protein is Bombyxin A-6 (BBXA6) of Bombyx mori (Silk moth).